A 198-amino-acid chain; its full sequence is Proteasome subunit beta 2 (198 aa).

A propeptide spans 1–4 (MVLA) (removed in mature form; by autocatalysis). T5 (nucleophile) is an active-site residue.

It belongs to the peptidase T1B family. The 20S proteasome core is composed of 14 alpha and 14 beta subunits that assemble into four stacked heptameric rings, resulting in a barrel-shaped structure. The two inner rings, each composed of seven catalytic beta subunits, are sandwiched by two outer rings, each composed of seven alpha subunits. The catalytic chamber with the active sites is on the inside of the barrel. Has a gated structure, the ends of the cylinder being occluded by the N-termini of the alpha-subunits. Is capped at one or both ends by the proteasome regulatory ATPase, PAN.

The protein resides in the cytoplasm. The catalysed reaction is Cleavage of peptide bonds with very broad specificity.. With respect to regulation, the formation of the proteasomal ATPase PAN-20S proteasome complex, via the docking of the C-termini of PAN into the intersubunit pockets in the alpha-rings, triggers opening of the gate for substrate entry. Interconversion between the open-gate and close-gate conformations leads to a dynamic regulation of the 20S proteasome proteolysis activity. Its function is as follows. Component of the proteasome core, a large protease complex with broad specificity involved in protein degradation. In Korarchaeum cryptofilum (strain OPF8), this protein is Proteasome subunit beta 2.